We begin with the raw amino-acid sequence, 733 residues long: MKDFTDTISESECDDEISIVPQVELTVPKTDDPTSPTVTFRMWVLGITACVLLSFLNQFFWYRTNPLTISSVSAQIAVVPIGHLMAKVLPTRRFFEGTRWSFTMNPGPFSTKEHVLITVFANSGSGAVYATHILSAVKLYYKRRLDFLPALLVMITTQVLGFGWAGLYRKHLVEPGEMWWPSNLVQVSLFRALHEKENKSKWGISRNQFFVITLITSFSYYLLPGYLFTVLTTVSWLCWISPKSILVNQLGSGSAGLGIGSFGLDWSTIASYLGSPLASPFFASANIAAGFFLVMYVITPLCYYLDLYNAKTFPIYSGKLFVASGKEYKVTSIIDANFRLDRQAYAETGPVHMSTFFAVTYGLGFATLSASIFHVLIFNGKDLWTQTRGAFGKNKKMDIHTKIMKRNYKEVPLWWFLSIFAVNLAVIVFICIYYKTQIQLPWWGAFLACLIAIFFTPLVGVIMATTNQAPGLNIITEYIIGYAYPERPVANICFKTYGYISMSQSLTFLSDLKLGTYMKIPPRTMFMAQVVGTLVAVIAYAGTAWWLMAEIPNLCDTNLLPPGSQWTCPSDRVFFDASVIWGLVGPRRMFGDLGEYSNINWFFVGGAIAPALVYLASRLFPNKKWISDIHIPVLIGATAIMPPASAVNFTSWLVMAFVFGHFVFKYRREWWQRYNYVLSGGMDAGTGFMSVLLFLALQRSEIAIDWWGNSGEGCPVAKCPTAKGVVVHGCPVF.

14 helical membrane passes run Met-42 to Tyr-62, Pro-66 to Ala-86, Val-115 to Ser-135, Phe-147 to Leu-167, Phe-209 to Thr-229, Ser-244 to Leu-264, Phe-281 to Leu-301, Phe-357 to Ile-377, Leu-413 to Tyr-433, Trp-442 to Ile-462, Val-531 to Ile-551, Tyr-596 to Ala-616, Ala-644 to Phe-664, and Val-677 to Leu-697.

The protein belongs to the oligopeptide OPT transporter (TC 2.A.67.1) family.

The protein localises to the membrane. Its function is as follows. May be involved in the translocation of tetra- and pentapeptides across the cellular membrane in an energy-dependent manner. The chain is Oligopeptide transporter 8 (OPT8) from Arabidopsis thaliana (Mouse-ear cress).